The primary structure comprises 109 residues: Cell division protein ZapA (109 aa).

Residues 21 to 99 adopt a coiled-coil conformation; the sequence is PEQLDALNQA…IEQALLEQGR (79 aa).

Belongs to the ZapA family. Type 1 subfamily. In terms of assembly, homodimer. Interacts with FtsZ.

It is found in the cytoplasm. Its function is as follows. Activator of cell division through the inhibition of FtsZ GTPase activity, therefore promoting FtsZ assembly into bundles of protofilaments necessary for the formation of the division Z ring. It is recruited early at mid-cell but it is not essential for cell division. This is Cell division protein ZapA from Edwardsiella ictaluri (strain 93-146).